The following is a 255-amino-acid chain: Diphthine synthase (255 aa).

Residues L9, D85, V88, 113 to 114, L164, A207, and H232 contribute to the S-adenosyl-L-methionine site; that span reads SI.

The protein belongs to the diphthine synthase family. As to quaternary structure, homodimer.

It carries out the reaction 2-[(3S)-amino-3-carboxypropyl]-L-histidyl-[translation elongation factor 2] + 3 S-adenosyl-L-methionine = diphthine-[translation elongation factor 2] + 3 S-adenosyl-L-homocysteine + 3 H(+). It participates in protein modification; peptidyl-diphthamide biosynthesis. Its function is as follows. S-adenosyl-L-methionine-dependent methyltransferase that catalyzes the trimethylation of the amino group of the modified target histidine residue in translation elongation factor 2 (EF-2), to form an intermediate called diphthine. The three successive methylation reactions represent the second step of diphthamide biosynthesis. The protein is Diphthine synthase of Methanococcus maripaludis (strain C6 / ATCC BAA-1332).